Here is a 219-residue protein sequence, read N- to C-terminus: Protein-L-isoaspartate O-methyltransferase (219 aa).

The active site involves Ser65.

This sequence belongs to the methyltransferase superfamily. L-isoaspartyl/D-aspartyl protein methyltransferase family. As to quaternary structure, monomer.

The protein localises to the cytoplasm. It carries out the reaction [protein]-L-isoaspartate + S-adenosyl-L-methionine = [protein]-L-isoaspartate alpha-methyl ester + S-adenosyl-L-homocysteine. Catalyzes the methyl esterification of L-isoaspartyl residues in peptides and proteins that result from spontaneous decomposition of normal L-aspartyl and L-asparaginyl residues. It plays a role in the repair and/or degradation of damaged proteins. The chain is Protein-L-isoaspartate O-methyltransferase (pcm) from Pyrococcus furiosus (strain ATCC 43587 / DSM 3638 / JCM 8422 / Vc1).